The primary structure comprises 178 residues: Fatty-acid and retinol-binding protein 1 (178 aa).

The first 16 residues, Met1–Ala16, serve as a signal peptide directing secretion. N-linked (GlcNAc...) asparagine glycosylation is found at Asn44 and Asn75. 2 coiled-coil regions span residues Asp67–Asn89 and Lys123–Ala153. Asn157 is a glycosylation site (N-linked (GlcNAc...) asparagine).

This sequence belongs to the fatty-acid and retinol-binding protein (FARBP) family. Post-translationally, N-glycosylated.

The protein localises to the secreted. In terms of biological role, binds retinol and different fatty acids. This is Fatty-acid and retinol-binding protein 1 from Acanthocheilonema viteae (Filarial nematode worm).